We begin with the raw amino-acid sequence, 591 residues long: Probable LRR receptor-like serine/threonine-protein kinase At1g69990 (591 aa).

The signal sequence occupies residues 1 to 18 (MKTISIFFVIILMSSSHA). Over 19–218 (EDDVLCLKGF…GKNLTIIVTA (200 aa)) the chain is Extracellular. The N-linked (GlcNAc...) asparagine glycan is linked to asparagine 46. LRR repeat units lie at residues 66–88 (RILS…LKLC), 90–111 (SLQS…QICS), 115–137 (YLVT…IVDC), 139–162 (FLNS…TRLN), and 163–185 (RLQR…LSHY). The N-linked (GlcNAc...) asparagine glycan is linked to asparagine 211. A helical transmembrane segment spans residues 219-239 (GVIGAVGSLCVGFGMFWWFFI). At 240–591 (RDRRKMNNYG…LIFNKQEHLK (352 aa)) the chain is on the cytoplasmic side. Threonine 292 is subject to Phosphothreonine. Residues 295 to 573 (FDSGNIVVSS…KNLGDQHGFF (279 aa)) form the Protein kinase domain. ATP-binding positions include 301–309 (VVSSRSGVS) and lysine 323. Serine 378 carries the post-translational modification Phosphoserine. Threonine 389 is subject to Phosphothreonine. Tyrosine 463 carries the post-translational modification Phosphotyrosine. Serine 465 is subject to Phosphoserine. At threonine 466 the chain carries Phosphothreonine. Phosphoserine is present on serine 470.

It belongs to the protein kinase superfamily. Ser/Thr protein kinase family.

The protein resides in the membrane. It carries out the reaction L-seryl-[protein] + ATP = O-phospho-L-seryl-[protein] + ADP + H(+). The enzyme catalyses L-threonyl-[protein] + ATP = O-phospho-L-threonyl-[protein] + ADP + H(+). This chain is Probable LRR receptor-like serine/threonine-protein kinase At1g69990, found in Arabidopsis thaliana (Mouse-ear cress).